The following is a 464-amino-acid chain: Juvenile hormone epoxide hydrolase 1 (464 aa).

The helical transmembrane segment at 7 to 27 (MLIFAAIAGIAVLYYQITKEL) threads the bilayer. Asp224 (nucleophile) is an active-site residue. The active-site Proton donor is the Tyr370. His427 serves as the catalytic Proton acceptor.

Belongs to the peptidase S33 family. As to expression, developing oocytes, fat body and midgut epithelium of adults.

The protein resides in the microsome membrane. It localises to the endoplasmic reticulum membrane. The enzyme catalyses cis-stilbene oxide + H2O = (1R,2R)-hydrobenzoin. The catalysed reaction is 1-(4-methoxyphenyl)-N-methyl-N-[(3-methyloxetan-3-yl)methyl]methanamine + H2O = 2-{[(4-methoxybenzyl)(methyl)amino]methyl}-2-methylpropane-1,3-diol. Its function is as follows. Catalyzes juvenile hormone hydrolysis. The polypeptide is Juvenile hormone epoxide hydrolase 1 (Ctenocephalides felis (Cat flea)).